The chain runs to 123 residues: Small ribosomal subunit protein uS12 (123 aa).

The protein belongs to the universal ribosomal protein uS12 family. Part of the 30S ribosomal subunit. Contacts proteins S8 and S17. May interact with IF1 in the 30S initiation complex.

With S4 and S5 plays an important role in translational accuracy. Functionally, interacts with and stabilizes bases of the 16S rRNA that are involved in tRNA selection in the A site and with the mRNA backbone. Located at the interface of the 30S and 50S subunits, it traverses the body of the 30S subunit contacting proteins on the other side and probably holding the rRNA structure together. The combined cluster of proteins S8, S12 and S17 appears to hold together the shoulder and platform of the 30S subunit. This is Small ribosomal subunit protein uS12 from Corynebacterium diphtheriae (strain ATCC 700971 / NCTC 13129 / Biotype gravis).